Consider the following 166-residue polypeptide: Podoplanin (166 aa).

The N-terminal stretch at 1 to 22 (MWTAPVLLWVLGSVWFWDSAQG) is a signal peptide. The Extracellular segment spans residues 23-135 (GAIGALEDDL…KKDGLAVVTL (113 aa)). 4 O-linked (GalNAc...) threonine glycosylation sites follow: Thr-34, Thr-52, Thr-55, and Thr-56. The span at 54–63 (DTTGELDKST) shows a compositional bias: basic and acidic residues. A disordered region spans residues 54–124 (DTTGELDKST…DNAGGETQTT (71 aa)). Residue Ser-62 is glycosylated (O-linked (GalNAc...) serine). Residues Thr-63, Thr-71, and Thr-80 are each glycosylated (O-linked (GalNAc...) threonine). Residue Ser-81 is glycosylated (O-linked (GalNAc...) serine). Thr-83 carries O-linked (GalNAc...) threonine glycosylation. Ser-84 is a glycosylation site (O-linked (GalNAc...) serine). The span at 84–93 (SDHDHKEHES) shows a compositional bias: basic and acidic residues. O-linked (GalNAc...) threonine glycosylation is found at Thr-94, Thr-95, Thr-96, Thr-101, Thr-105, Thr-109, and Thr-110. The segment covering 94–103 (TTTVKAVTSH) has biased composition (polar residues). Residues 104 to 114 (STDKKTTHPNR) are compositionally biased toward basic and acidic residues. The helical transmembrane segment at 136 to 156 (VGIIIGVLLAIGFIGGIIIVV) threads the bilayer. Residues 137 to 141 (GIIIG) form a requires for dimerization and lipid rafts association region. The Cytoplasmic portion of the chain corresponds to 157 to 166 (MRKISGRFSP). The interval 158–159 (RK) is requires for interaction with MSN and EZR.

It belongs to the podoplanin family. Homodimer. Interacts with CLEC1B; the interaction is independent of CLEC1B glycosylation and activates CLEC1B; the interaction is dependent of sialic acid on O-glycans. Interacts with CD9; this interaction is homophilic and attenuates platelet aggregation and pulmonary metastasis induced by PDPN. Interacts with LGALS8; the interaction is glycosylation-dependent; may participate in connection of the lymphatic endothelium to the surrounding extracellular matrix. Interacts with HSPA9. Interacts (via extracellular domain) with CD44; this interaction is required for PDPN-mediated directional migration and regulation of lamellipodia extension/stabilization during cell spreading and migration. Interacts (via cytoplasmic domain) with MSN and EZR; activates RHOA and promotes epithelial-mesenchymal transition. Interacts with CCL21; relocalized PDPN to the basolateral membrane. In terms of processing, extensively O-glycosylated. Contains sialic acid residues. O-glycosylation is necessary for platelet aggregation activity. Disialylated at Thr-52; sialic acid is critical for platelet-aggregating activity and for CLEC1B interaction. The N-terminus is blocked. In adult kidney, expressed on the urinary surface and foot processes of podocytes and in parietal epithelial cells of Bowman's capsule where it is localized to luminal surfaces. In lung, expressed exclusively on luminal surfaces of type I alveolar epithelial cells and pleural mesothelial cells. Not expressed in type II alveolar cells. In bone, expressed in osteocytes and osteoblasts. In spleen, liver, stomach and intestine, expressed in mesoepithelium. Also expressed in thymic epithelial cells, choroid plexus and leptomeninges.

It localises to the membrane. Its subcellular location is the cell projection. The protein localises to the lamellipodium membrane. It is found in the filopodium membrane. The protein resides in the microvillus membrane. It localises to the ruffle membrane. Its subcellular location is the membrane raft. The protein localises to the apical cell membrane. It is found in the basolateral cell membrane. The protein resides in the invadopodium. In terms of biological role, mediates effects on cell migration and adhesion through its different partners. During development plays a role in blood and lymphatic vessels separation by binding CLEC1B, triggering CLEC1B activation in platelets and leading to platelet activation and/or aggregation. Interaction with CD9, on the contrary, attenuates platelet aggregation and pulmonary metastasis induced by PDPN. Mediates effects on cell migration and adhesion through its different partners. Through MSN or EZR interaction promotes epithelial-mesenchymal transition (EMT) leading to ERZ phosphorylation and triggering RHOA activation leading to cell migration increase and invasiveness. Interaction with CD44 promotes directional cell migration in epithelial and tumor cells. In lymph nodes (LNs), controls fibroblastic reticular cells (FRCs) adhesion to the extracellular matrix (ECM) and contraction of the actomyosin by maintaining ERM proteins (EZR; MSN and RDX) and MYL9 activation through association with unknown transmembrane proteins. Engagement of CLEC1B by PDPN promotes FRCs relaxation by blocking lateral membrane interactions leading to reduction of ERM proteins (EZR; MSN and RDX) and MYL9 activation. Through binding with LGALS8 may participate in connection of the lymphatic endothelium to the surrounding extracellular matrix. In keratinocytes, induces changes in cell morphology showing an elongated shape, numerous membrane protrusions, major reorganization of the actin cytoskeleton, increased motility and decreased cell adhesion. Controls invadopodia stability and maturation leading to efficient degradation of the extracellular matrix (ECM) in tumor cells through modulation of RHOC activity in order to activate ROCK1/ROCK2 and LIMK1/LIMK2 and inactivation of CFL1. Required for normal lung cell proliferation and alveolus formation at birth. Does not function as a water channel or as a regulator of aquaporin-type water channels. Does not have any effect on folic acid or amino acid transport. This Rattus norvegicus (Rat) protein is Podoplanin.